The chain runs to 136 residues: Histone H3.2 (136 aa).

The disordered stretch occupies residues 1-43; the sequence is MARTKQTARKSTGGKAPRKQLATKAARKSAPATGGVKKPHRFR. An N6-methylated lysine modification is found at Lys-5. Lys-10 carries the N6-acetyllysine; alternate modification. Lys-10 is subject to N6-methylated lysine; alternate. At Ser-11 the chain carries Phosphoserine. Residue Thr-12 is modified to Phosphothreonine. N6-acetyllysine is present on Lys-15. N6-acetyllysine; alternate occurs at positions 19 and 24. N6-methylated lysine; alternate occurs at positions 19 and 24. Lys-28 carries the N6-methylated lysine modification. Ser-29 carries the post-translational modification Phosphoserine. Position 37 is an N6-methylated lysine (Lys-37).

Belongs to the histone H3 family. The nucleosome is a histone octamer containing two molecules each of H2A, H2B, H3 and H4 assembled in one H3-H4 heterotetramer and two H2A-H2B heterodimers. The octamer wraps approximately 147 bp of DNA. Post-translationally, acetylation is generally linked to gene activation. Can be acetylated to form H3K9ac, H3K14ac, H3K18ac and H3K23ac. H3K9ac could compete with H3K9me and prevent gene silencing. H3K9ac is restricted to euchromatin. Methylated to form mainly H3K4me, H3K9me, H3K18me, H3K23me, H3K27me and H3K36me. H3K4me1/2/3, H3K9me3, H3K27me3 and H3K36me1/2/3 are typical marks for euchromatin, whereas heterochromatic chromocenters are enriched in H3K9me1/2 and H3K27me1/2. H2BK143ub1 is probably prerequisite for H3K4me. In terms of processing, can be phosphorylated to form H3S10ph, H3T11ph and H3S28ph.

The protein resides in the nucleus. It localises to the chromosome. Its function is as follows. Core component of nucleosome. Nucleosomes wrap and compact DNA into chromatin, limiting DNA accessibility to the cellular machineries which require DNA as a template. Histones thereby play a central role in transcription regulation, DNA repair, DNA replication and chromosomal stability. DNA accessibility is regulated via a complex set of post-translational modifications of histones, also called histone code, and nucleosome remodeling. The polypeptide is Histone H3.2 (Encephalartos altensteinii (Altenstein's bread tree)).